The following is a 540-amino-acid chain: MTQNSLPSWSSLQTHYEKIRDAHMRDWFAPENDPAPTRAERFAFAGGGLAADFSKNRITDETLKLLVQLAREAGVEKRRDAMFAGAVVNPTEGRAALHTALRATDPKAPFYDQVQAERARMAAFADQVRSGEWKGYTGKRIRYVVNIGIGGSDLGPKMVVHALHHLATPEITTHFVSNVDGADLYNVMQQIDPEETLAIIVSKTFTTLETMTNARSLRDWFVEKGCPESALAKHFVGVSANPAEVVKFGIAKENVFEMWDWVGGRYSLWSAVGLSIMIAVGPQQFGELLAGANEMDQHFRDAPLEKNLPVLLGMIGIWYRNFFGSQSYLVAPYSEALHFLPSYLQQLEMESNGKSARLDGVMVDYPTAAVTWGEPGTNGQHAFFQMLHQGPTIVPIDFIAVLTPEHPLVSHHPKLLANCFAQSEALMLGRTLEEAKKVAGADKPELAPHLVFPGNRPTSTLLVDALTARSLGALIALYEHKVLVQASVWDINPFDQWGVELGKILGKVVEADLTAPSVDEKKHDSSTSALIARARAALKK.

The active-site Proton donor is Glu350. Active-site residues include His381 and Lys503.

Belongs to the GPI family.

It localises to the cytoplasm. It carries out the reaction alpha-D-glucose 6-phosphate = beta-D-fructose 6-phosphate. The protein operates within carbohydrate biosynthesis; gluconeogenesis. It functions in the pathway carbohydrate degradation; glycolysis; D-glyceraldehyde 3-phosphate and glycerone phosphate from D-glucose: step 2/4. In terms of biological role, catalyzes the reversible isomerization of glucose-6-phosphate to fructose-6-phosphate. This chain is Glucose-6-phosphate isomerase, found in Paraburkholderia xenovorans (strain LB400).